A 403-amino-acid chain; its full sequence is Conserved oligomeric Golgi complex subunit 5 (403 aa).

It belongs to the COG5 family. In terms of assembly, component of the conserved oligomeric Golgi (COG or Sec34/Sec35) complex which consists of eight different proteins COG1-COG8.

It is found in the golgi apparatus membrane. Acts as a component of the peripheral membrane COG complex that is involved in intra-Golgi protein trafficking. COG is located at the cis-Golgi, and regulates tethering of retrograde intra-Golgi vesicles and possibly a number of other membrane trafficking events. This chain is Conserved oligomeric Golgi complex subunit 5 (COG5), found in Saccharomyces cerevisiae (strain ATCC 204508 / S288c) (Baker's yeast).